A 485-amino-acid polypeptide reads, in one-letter code: Expansin-like protein 8 (485 aa).

The signal sequence occupies residues 1–21; sequence MRISIILLSLLFLSLHSLIKA. The Extracellular segment spans residues 22-464; it reads DITKLSVCGS…QSGHHASSNT (443 aa). Residues 26 to 139 enclose the Expansin-like EG45 domain; that stretch reads LSVCGSARAV…QIVSCGYSGN (114 aa). 2 disulfide bridges follow: Cys29–Cys70 and Cys73–Cys134. Asn117 and Asn365 each carry an N-linked (GlcNAc...) asparagine glycan. Positions 408-436 are disordered; it reads EVNNKPSTTSGTGTTSSKPSSSSGGVSGG. Low complexity predominate over residues 414-431; it reads STTSGTGTTSSKPSSSSG. N-linked (GlcNAc...) asparagine glycosylation occurs at Asn454. The helical transmembrane segment at 465–485 threads the bilayer; the sequence is NILLPTTFVFFISITILSLLF.

It belongs to the expansin family. Expansin A subfamily.

Its subcellular location is the membrane. May serve to lubricate the movement of the cellulose microfibrils during cell growth and wall extension and/or may serve to maintain the fluid state of the slug cell wall. This chain is Expansin-like protein 8 (expl8), found in Dictyostelium discoideum (Social amoeba).